The chain runs to 1018 residues: Pikachurin (1018 aa).

An N-terminal signal peptide occupies residues 1–23 (MDLIRGVLLRLLLLASSLGPGAA). 2 Fibronectin type-III domains span residues 37–145 (PPLD…TLPQ) and 153–248 (APQQ…TARP). Asparagine 47 carries N-linked (GlcNAc...) asparagine glycosylation. The disordered stretch occupies residues 228–274 (VNPHGSSPRSQPSSTIRTARPEESGSGRYGPHYATDTEAGEDDDTFE). A compositionally biased stretch (polar residues) spans 231–244 (HGSSPRSQPSSTIR). Over residues 265–274 (EAGEDDDTFE) the composition is skewed to acidic residues. The 39-residue stretch at 352–390 (FDTSCDETVCSADSFCVSDYTWGGSRCHCNLGKGGESCS) folds into the EGF-like 1 domain. 11 disulfides stabilise this stretch: cysteine 356–cysteine 367, cysteine 361–cysteine 378, cysteine 380–cysteine 389, cysteine 543–cysteine 573, cysteine 578–cysteine 589, cysteine 583–cysteine 599, cysteine 601–cysteine 610, cysteine 797–cysteine 808, cysteine 802–cysteine 817, cysteine 819–cysteine 828, and cysteine 988–cysteine 1015. A Laminin G-like 1 domain is found at 395–573 (IQYPQFFGHS…ALSGADVGEC (179 aa)). 2 consecutive EGF-like domains span residues 574 to 611 (SSGICDEASCINGGTCMASKADSYICLCPLGFRGRHCE) and 793 to 829 (AAHPCVGSPCAHGGSCRPRKEGYECDCPLGFEGLHCQ). The region spanning 618–797 (IPQFKESLRS…VNVENAAHPC (180 aa)) is the Laminin G-like 2 domain. The Laminin G-like 3 domain occupies 836–1015 (IEIPQFIGRS…AVDGKNINTC (180 aa)).

In terms of assembly, interacts with DAG1 alpha-dystroglycan. Interacts with GPR158 and GPR179; transsynaptic interaction is required for synaptic organization of photoreceptor cells. In terms of processing, O-glycosylated; contains chondroitin sulfate and heparan sulfate.

The protein resides in the secreted. The protein localises to the extracellular space. Its subcellular location is the extracellular matrix. It localises to the synaptic cleft. It is found in the presynaptic active zone. Its function is as follows. Involved in both the retinal photoreceptor ribbon synapse formation and physiological functions of visual perception. Plays a key role in the synaptic organization of photoreceptors by mediating transsynaptic interaction between alpha-dystroglycan and GPR179 on the postsynaptic membrane. Necessary for proper bipolar dendritic tip apposition to the photoreceptor ribbon synapse. Promotes matrix assembly and cell adhesiveness. This is Pikachurin (EGFLAM) from Bos taurus (Bovine).